The sequence spans 599 residues: MNLMMFDYRRSHTCGQLRKEKVNSQVTLSGWVNRRRDHGGLIFIDLRDRFGLTQLVFDPIKSPTAHLAAEKLRSEWVISVKGTVIPRQEGMTNPKLPTGEIEIMVHEMDILSKSKTPPFSVSDDLIEVNEELRLKYRYLDIRRGDVAKKLITRHQAMLAVRNYLNNQGFLEISTPILGKSTPEGARDYLVPSRVYPGNFYALPQSPQIFKQLLMISGMDRYFQIAQCFRDEDLRADRQPEFTQIDMEMSFGTPEDLMNIVEDLIKTVFKTCSNIDVPTPFKRLSHAICMEEYGCDRPDLRFGMKLHNLNHLAAQTTFSVFLDQIRENGLVKGFCIKGGADFSRKTIDEYTEFVGRLGVKGLAWIKRQENGLNSSIVKFFPESIHQQLIEEMEMEVGDIIFMIANTPSKTNQALDHLRRKIARDRNLVDPHHYEFLWVTDFPLFSWNEEEKRLQSEHHPFTSPHLEDLHLMETNPLKMRSSGYDIVLNGYEIGGGSQRIHNSDLQQKIFERLKFSPEELETKFGFFLEALNYGTPPHLGIALGLDRIIMILTQTENIRDVIAFPKTQKASDLMIECPSPVANEQLKELEIRVPDSQFSWT.

Glu183 serves as a coordination point for L-aspartate. Residues 207 to 210 (QIFK) form an aspartate region. L-aspartate is bound at residue Arg229. ATP contacts are provided by residues 229-231 (RDE) and Gln238. Residue His456 participates in L-aspartate binding. Glu490 serves as a coordination point for ATP. Arg497 contributes to the L-aspartate binding site. Residue 542-545 (GLDR) participates in ATP binding.

It belongs to the class-II aminoacyl-tRNA synthetase family. Type 1 subfamily. As to quaternary structure, homodimer.

It is found in the cytoplasm. The catalysed reaction is tRNA(Asx) + L-aspartate + ATP = L-aspartyl-tRNA(Asx) + AMP + diphosphate. Its function is as follows. Aspartyl-tRNA synthetase with relaxed tRNA specificity since it is able to aspartylate not only its cognate tRNA(Asp) but also tRNA(Asn). Reaction proceeds in two steps: L-aspartate is first activated by ATP to form Asp-AMP and then transferred to the acceptor end of tRNA(Asp/Asn). The sequence is that of Aspartate--tRNA(Asp/Asn) ligase from Protochlamydia amoebophila (strain UWE25).